A 352-amino-acid polypeptide reads, in one-letter code: Fe(3+) ions import ATP-binding protein FbpC (352 aa).

In terms of domain architecture, ABC transporter spans 5–239 (LHIGHLSKSF…PADLDAVLFI (235 aa)). 37-44 (GASGCGKT) contributes to the ATP binding site.

This sequence belongs to the ABC transporter superfamily. Fe(3+) ion importer (TC 3.A.1.10) family. The complex is composed of two ATP-binding proteins (FbpC), two transmembrane proteins (FbpB) and a solute-binding protein (FbpA).

The protein resides in the cell inner membrane. It catalyses the reaction Fe(3+)(out) + ATP + H2O = Fe(3+)(in) + ADP + phosphate + H(+). Functionally, part of the ABC transporter complex FbpABC involved in Fe(3+) ions import. Responsible for energy coupling to the transport system. This chain is Fe(3+) ions import ATP-binding protein FbpC, found in Neisseria gonorrhoeae.